Reading from the N-terminus, the 570-residue chain is 2-succinyl-5-enolpyruvyl-6-hydroxy-3-cyclohexene-1-carboxylate synthase (570 aa).

This sequence belongs to the TPP enzyme family. MenD subfamily. In terms of assembly, homodimer. Mg(2+) is required as a cofactor. Requires Mn(2+) as cofactor. Thiamine diphosphate serves as cofactor.

The catalysed reaction is isochorismate + 2-oxoglutarate + H(+) = 5-enolpyruvoyl-6-hydroxy-2-succinyl-cyclohex-3-ene-1-carboxylate + CO2. Its pathway is quinol/quinone metabolism; 1,4-dihydroxy-2-naphthoate biosynthesis; 1,4-dihydroxy-2-naphthoate from chorismate: step 2/7. The protein operates within quinol/quinone metabolism; menaquinone biosynthesis. Functionally, catalyzes the thiamine diphosphate-dependent decarboxylation of 2-oxoglutarate and the subsequent addition of the resulting succinic semialdehyde-thiamine pyrophosphate anion to isochorismate to yield 2-succinyl-5-enolpyruvyl-6-hydroxy-3-cyclohexene-1-carboxylate (SEPHCHC). The protein is 2-succinyl-5-enolpyruvyl-6-hydroxy-3-cyclohexene-1-carboxylate synthase of Vibrio cholerae serotype O1 (strain ATCC 39541 / Classical Ogawa 395 / O395).